Reading from the N-terminus, the 562-residue chain is MSLLYIILLFTQFLLLPTDAFDRSANTNIAVYWGQNSAGTQESLATYCESSDADIFLLSFLNQFPTLGLNFANACSDTFSDGLLHCTQIAEDIETCQSLGKKVLLSLGGASGSYLFSDDSQAETFAQTLWDTFGEGTGASERPFDSAVVDGFDFDIENNNEVGYSALATKLRTLFAEGTKQYYLSAAPQCPYPDASVGDLLENADIDFAFIQFYNNYCSVSGQFNWDTWLTYAQTVSPNKNIKLFLGLPGSASAAGSGYISDTSLLESTIADIASSSSFGGIALWDASQAFSNELNGEPYVEILKNLLTSASQTATTTVATSKTSAASTSSASTSSASTSQKKTTQSTTSTQSKSKVTLSPTASSAIKTSITQTTKTLTSSTKTKSSLGTTTTESTLNSVAITSMKTTLSSQITSAALVTPQTTTTSIVSSAPIQTAITSTLSPATKSSSVVSLQTATTSTLSPTTTSTSSGSTSSGSTSSDSTARTLAKELNAQYAAGKLNGKSTCTEGEIACSADGKFAVCDHSAWVYMECASGTTCYAYDSGDSVYTQCNFSYLESNYF.

Residues 1–20 (MSLLYIILLFTQFLLLPTDA) form the signal peptide. The 285-residue stretch at 27–311 (TNIAVYWGQN…EILKNLLTSA (285 aa)) folds into the GH18 domain. The active-site Proton donor is Glu157. 2 disordered regions span residues 329–358 (TSSASTSSASTSQKKTTQSTTSTQSKSKVT) and 461–484 (TLSPTTTSTSSGSTSSGSTSSDST). A chitin-binding, high affinity region spans residues 481–562 (SDSTARTLAK…NFSYLESNYF (82 aa)). An N-linked (GlcNAc...) asparagine glycan is attached at Asn553.

The protein belongs to the glycosyl hydrolase 18 family. Chitinase class V subfamily. Extensively glycosylated with a series of short O-linked mannose oligosaccharides ranging in size from Man(2) to Man(5).

The protein localises to the secreted. The protein resides in the cell wall. The catalysed reaction is Random endo-hydrolysis of N-acetyl-beta-D-glucosaminide (1-&gt;4)-beta-linkages in chitin and chitodextrins.. Chitinase is required for cell separation during growth of S.cerevisiae. This is Endochitinase (CTS1) from Saccharomyces cerevisiae (strain ATCC 204508 / S288c) (Baker's yeast).